A 474-amino-acid polypeptide reads, in one-letter code: tRNA-2-methylthio-N(6)-dimethylallyladenosine synthase (474 aa).

In terms of domain architecture, MTTase N-terminal spans 3–120 (KKLHIKTWGC…LPEMINSVRG (118 aa)). The [4Fe-4S] cluster site is built by cysteine 12, cysteine 49, cysteine 83, cysteine 157, cysteine 161, and cysteine 164. In terms of domain architecture, Radical SAM core spans 143 to 375 (RAEGPTAFVS…QERINQQAMA (233 aa)). The region spanning 378-441 (RRMLGSTQRI…PNSLRGKVVR (64 aa)) is the TRAM domain.

It belongs to the methylthiotransferase family. MiaB subfamily. Monomer. [4Fe-4S] cluster serves as cofactor.

It localises to the cytoplasm. It catalyses the reaction N(6)-dimethylallyladenosine(37) in tRNA + (sulfur carrier)-SH + AH2 + 2 S-adenosyl-L-methionine = 2-methylsulfanyl-N(6)-dimethylallyladenosine(37) in tRNA + (sulfur carrier)-H + 5'-deoxyadenosine + L-methionine + A + S-adenosyl-L-homocysteine + 2 H(+). Functionally, catalyzes the methylthiolation of N6-(dimethylallyl)adenosine (i(6)A), leading to the formation of 2-methylthio-N6-(dimethylallyl)adenosine (ms(2)i(6)A) at position 37 in tRNAs that read codons beginning with uridine. This is tRNA-2-methylthio-N(6)-dimethylallyladenosine synthase from Salmonella arizonae (strain ATCC BAA-731 / CDC346-86 / RSK2980).